The following is a 65-amino-acid chain: Large ribosomal subunit protein bL28 (65 aa).

A disordered region spans residues 1–21; that stretch reads MAKKDQLTLRGPLYGNNRSHS.

The protein belongs to the bacterial ribosomal protein bL28 family.

The chain is Large ribosomal subunit protein bL28 from Mycoplasma pneumoniae (strain ATCC 29342 / M129 / Subtype 1) (Mycoplasmoides pneumoniae).